The following is a 566-amino-acid chain: Arginine--tRNA ligase (566 aa).

The 'HIGH' region signature appears at 121-131; the sequence is ANPNGPFHIGH.

It belongs to the class-I aminoacyl-tRNA synthetase family.

Its subcellular location is the cytoplasm. The catalysed reaction is tRNA(Arg) + L-arginine + ATP = L-arginyl-tRNA(Arg) + AMP + diphosphate. The protein is Arginine--tRNA ligase of Methanococcus maripaludis (strain C6 / ATCC BAA-1332).